The primary structure comprises 1047 residues: Probable sucrose-phosphate synthase 2 (1047 aa).

The span at 101 to 123 (EGKNAKREAKREREREKARREVT) shows a compositional bias: basic and acidic residues. The segment at 101 to 153 (EGKNAKREAKREREREKARREVTAEMSEDFSEGEKADLPGEIPTPSDNNTKGR) is disordered. A phosphoserine mark is found at serine 127, serine 131, and serine 159. Positions 712 to 731 (KSGSNNGVDTNLDAEDRAAE) are disordered.

The protein belongs to the glycosyltransferase 1 family. As to quaternary structure, homodimer or homotetramer. In terms of tissue distribution, expressed in roots, cauline leaves, flower buds, flowers and anthers. Highly expressed in maturing nectaries.

The catalysed reaction is beta-D-fructose 6-phosphate + UDP-alpha-D-glucose = sucrose 6(F)-phosphate + UDP + H(+). It participates in glycan biosynthesis; sucrose biosynthesis; sucrose from D-fructose 6-phosphate and UDP-alpha-D-glucose: step 1/2. Activity is regulated by phosphorylation and moderated by concentration of metabolites and light. Its function is as follows. Plays a role in photosynthetic sucrose synthesis by catalyzing the rate-limiting step of sucrose biosynthesis from UDP-glucose and fructose- 6-phosphate. Involved in the regulation of carbon partitioning in the leaves of plants. May regulate the synthesis of sucrose and therefore play a major role as a limiting factor in the export of photoassimilates out of the leaf. Plays a role for sucrose availability that is essential for plant growth and fiber elongation. Required for nectar secretion. The protein is Probable sucrose-phosphate synthase 2 (SPS2) of Arabidopsis thaliana (Mouse-ear cress).